The primary structure comprises 388 residues: F-box/kelch-repeat protein At3g17530 (388 aa).

Residues 1-50 (MMISDLPHDLESEILSRVPAKSLAKWKTTCKRWYALFRDPSFVKKNFDKA) enclose the F-box domain. 2 Kelch repeats span residues 163-208 (CCYY…VSLK) and 336-383 (RIYI…AEEN).

This Arabidopsis thaliana (Mouse-ear cress) protein is F-box/kelch-repeat protein At3g17530.